We begin with the raw amino-acid sequence, 431 residues long: COBRA-like protein 4 (431 aa).

A signal peptide spans 1-20; the sequence is MRLLFSFCFFFFMIIFTATA. 8 N-linked (GlcNAc...) asparagine glycosylation sites follow: Asn29, Asn154, Asn162, Asn201, Asn226, Asn306, Asn321, and Asn340. Asn414 carries the GPI-anchor amidated asparagine lipid modification. The propeptide at 415 to 431 is removed in mature form; sequence FASFSLTILLLLFISIW.

The protein belongs to the COBRA family. Expressed in roots, stems, leaves, flowers and siliques.

It localises to the cell membrane. The protein is COBRA-like protein 4 (COBL4) of Arabidopsis thaliana (Mouse-ear cress).